The sequence spans 473 residues: M-phase inducer phosphatase 3 (473 aa).

The disordered stretch occupies residues 1–23 (MSTELFSSTREEGSSGSGPSFRS). Ser2 is modified (N-acetylserine). A phosphoserine mark is found at Ser20 and Ser38. The residue at position 48 (Thr48) is a Phosphothreonine. Phosphoserine is present on residues Ser57, Ser61, and Ser64. Phosphothreonine is present on Thr67. Residue Ser122 is modified to Phosphoserine; by CDK1. The residue at position 129 (Ser129) is a Phosphoserine. Residue Thr130 is modified to Phosphothreonine. The disordered stretch occupies residues 132–158 (NGLDRGHRKRDAMCSSSANKENDNGNL). Positions 145-158 (CSSSANKENDNGNL) are enriched in polar residues. Ser168 carries the post-translational modification Phosphoserine. Ser191 and Ser198 each carry phosphoserine; by PLK3. Ser214 carries the phosphoserine; by CDK1 modification. Ser216 is modified (phosphoserine; by CHEK1, CHEK2, BRSK1, MAPK14 AND MARK3). Positions 321 to 428 (LIEKFYVIDC…FFPEYMELCE (108 aa)) constitute a Rhodanese domain. The HIV-1 Vpr binding site stretch occupies residues 334 to 379 (YEYLGGHIQGALNLYSQEELFNFFLKKPIVPLDTQKRIIIVFHCEF). Cys377 is an active-site residue. Ser472 bears the Phosphoserine mark.

Belongs to the MPI phosphatase family. In terms of assembly, interacts with MAPK14 and 14-3-3 proteins. When phosphorylated on Ser-129 and/or Thr-130, interacts with PLK1. Interacts with MARK3/C-TAK1. (Microbial infection) Interacts with HIV-1 Vpr; this interaction inactivates CDC25C phosphatase activity. In terms of processing, phosphorylated by CHEK1 and MAPK14 at Ser-216. This phosphorylation creates a binding site for 14-3-3 protein and inhibits the phosphatase. Phosphorylated by PLK4. Phosphorylated by PLK1, leading to activate the phosphatase activity. Phosphorylation by PLK3 at Ser-191 promotes nuclear translocation. Ser-198 is a minor phosphorylation site. Was initially reported to be phosphorylated by PLK3 at Ser-216. However, such phosphorylation by PLK3 was not confirmed by other groups. Phosphorylation at Thr-48, Thr-67, Ser-122, Thr-130, Ser-168 and Ser-214 occurs at G2 and G2-M transition and is probably catalyzed by CDK1. Ser-168 phosphorylation levels are lower than those at the other 5 CDK1 sites. Phosphorylation by CDK1 leads to increased activity.

It is found in the nucleus. The catalysed reaction is O-phospho-L-tyrosyl-[protein] + H2O = L-tyrosyl-[protein] + phosphate. Functionally, functions as a dosage-dependent inducer in mitotic control. Tyrosine protein phosphatase required for progression of the cell cycle. When phosphorylated, highly effective in activating G2 cells into prophase. Directly dephosphorylates CDK1 and activates its kinase activity. In Homo sapiens (Human), this protein is M-phase inducer phosphatase 3 (CDC25C).